The primary structure comprises 120 residues: Fluoride-specific ion channel FluC 1 (120 aa).

The next 2 membrane-spanning stretches (helical) occupy residues 3–23 (ALLT…LNCA) and 42–62 (LGCL…VAAL). The Na(+) site is built by Gly-69 and Thr-72. The helical transmembrane segment at 99-119 (ANLAAGVGAAVLGMAAVGWFL) threads the bilayer.

This sequence belongs to the fluoride channel Fluc/FEX (TC 1.A.43) family.

Its subcellular location is the cell membrane. The catalysed reaction is fluoride(in) = fluoride(out). Its activity is regulated as follows. Na(+) is not transported, but it plays an essential structural role and its presence is essential for fluoride channel function. Functionally, fluoride-specific ion channel. Important for reducing fluoride concentration in the cell, thus reducing its toxicity. The polypeptide is Fluoride-specific ion channel FluC 1 (Thermobifida fusca (strain YX)).